We begin with the raw amino-acid sequence, 313 residues long: MRQDHLITATQLSRDDIEAVLDRAREVADDPAAYADRHAGSVLALCFFEPSTRTRMSFDSAAKRLGMNTIGMGDVDSSSVSKGESLSDTVRVIEGYADALVLRHPSEGAATLAAERVSVPVVNAGDGAGQHPSQTLLDLHTIRENHGLDDLTVGIMGDLKYGRTVHSLAAALTEFDANQHFISPESLRLPRSVRFDLHETGAQVREHTDLEGVLGELDVLYVTRIQKERFPDENEYHRVAGEYQIDAETLEDAPDDLTVMHPLPRVDEIAPDVDETDHATYFEQAHNGIPVRMALLDILLENAEGDEGMEVDR.

The carbamoyl phosphate site is built by Arg-53 and Thr-54. Residue Lys-82 participates in L-aspartate binding. Carbamoyl phosphate contacts are provided by Arg-103, His-131, and Gln-134. Residues Arg-163 and Arg-224 each contribute to the L-aspartate site. The carbamoyl phosphate site is built by Leu-263 and Pro-264.

It belongs to the aspartate/ornithine carbamoyltransferase superfamily. ATCase family. Heterooligomer of catalytic and regulatory chains.

The catalysed reaction is carbamoyl phosphate + L-aspartate = N-carbamoyl-L-aspartate + phosphate + H(+). The protein operates within pyrimidine metabolism; UMP biosynthesis via de novo pathway; (S)-dihydroorotate from bicarbonate: step 2/3. Functionally, catalyzes the condensation of carbamoyl phosphate and aspartate to form carbamoyl aspartate and inorganic phosphate, the committed step in the de novo pyrimidine nucleotide biosynthesis pathway. This chain is Aspartate carbamoyltransferase catalytic subunit, found in Halorubrum lacusprofundi (strain ATCC 49239 / DSM 5036 / JCM 8891 / ACAM 34).